We begin with the raw amino-acid sequence, 293 residues long: Ribosomal protein L11 methyltransferase (293 aa).

Positions 145, 166, 188, and 230 each coordinate S-adenosyl-L-methionine.

The protein belongs to the methyltransferase superfamily. PrmA family.

The protein localises to the cytoplasm. It carries out the reaction L-lysyl-[protein] + 3 S-adenosyl-L-methionine = N(6),N(6),N(6)-trimethyl-L-lysyl-[protein] + 3 S-adenosyl-L-homocysteine + 3 H(+). Methylates ribosomal protein L11. The chain is Ribosomal protein L11 methyltransferase from Shewanella baltica (strain OS195).